Reading from the N-terminus, the 109-residue chain is RYamide neuropeptides (109 aa).

An N-terminal signal peptide occupies residues 1–22 (MNECVNKLLHLKFLFYFILGIQ). The residue at position 33 (Tyr-33) is a Tyrosine amide. The propeptide occupies 36–53 (STTYDESLKSRRIFIVPR). Tyr-63 is modified (tyrosine amide). Positions 67-109 (SGKYLCLSREINKLIVRKRLRNNDKERTPTLSFITKHFLMRNT) are excised as a propeptide.

It localises to the secreted. In terms of biological role, neuropeptides RYamide-1 and RYamide-2 are ligands for the G-protein coupled receptor RYa-R. May suppress feeding behavior. This chain is RYamide neuropeptides, found in Drosophila melanogaster (Fruit fly).